The chain runs to 600 residues: MTAAPASPQQIRDRLLQAIDPQSNIRNMVAVLEVISSLEKYPITKEALEETRLGKLINDVRKKTKNEELAKRAKKLLRSWQKLIEPAHQHEAALRGLAGATGSANGGAHNCRPEVGAAGPPRSIHDLKSRNDLQRLPGQRLDRLGSRKRRGDQRDLGHPGPPPKVSKASHDPLVPNSSPLPTNGISGSPESFASSLDGSGHAGPEGSRLERDENDKHSGKIPVNAVRPHTSSPGLGKPPGPCLQPKASVLQQLDRVDETPGPPHPKGPPRCSFSPRNSRHEGSFARQQSLYAPKGSVPSPSPRPQALDATQVPSPLPLAQPSTPPVRRLELLPSAESPVCWLEQPESHQRLAGPGCKAGLSPAEPLLSRAGFSPDSSKADSDAASSGGSDSKKKKRYRPRDYTVNLDGQVAEAGVKPVRLKERKLTFDPMTRQIKPLTQKEPVRADSPVHMEQQSRTELDKQEAKASLQSPFEQTNWKELSRNEIIQSYLSRQSSLLSSSGAQTPGAHHFMSEYLKQEESTRQGARQLHVLVPQSPPTDLPGLTREVTQDDLDRIQASQWPGVNGCQDTQGNWYDWTQCISLDPHGDDGRLNILPYVCLD.

One can recognise a TFIIS N-terminal domain in the interval 10–87 (QIRDRLLQAI…RSWQKLIEPA (78 aa)). 3 disordered regions span residues 99–330 (GATG…RRLE), 348–402 (HQRL…PRDY), and 431–461 (TRQI…ELDK). Basic and acidic residues predominate over residues 123-133 (SIHDLKSRNDL). Positions 175-197 (PNSSPLPTNGISGSPESFASSLD) are enriched in polar residues. The span at 207 to 218 (SRLERDENDKHS) shows a compositional bias: basic and acidic residues. The span at 314–324 (SPLPLAQPSTP) shows a compositional bias: pro residues. The span at 441–461 (EPVRADSPVHMEQQSRTELDK) shows a compositional bias: basic and acidic residues. S447, S470, and S535 each carry phosphoserine.

The protein belongs to the Mediator complex subunit 26 family. As to quaternary structure, component of the Mediator complex, which is composed of MED1, MED4, MED6, MED7, MED8, MED9, MED10, MED11, MED12, MED13, MED13L, MED14, MED15, MED16, MED17, MED18, MED19, MED20, MED21, MED22, MED23, MED24, MED25, MED26, MED27, MED29, MED30, MED31, CCNC, CDK8 and CDC2L6/CDK11. The MED12, MED13, CCNC and CDK8 subunits form a distinct module termed the CDK8 module. Mediator containing the CDK8 module is less active than Mediator lacking this module in supporting transcriptional activation. Individual preparations of the Mediator complex lacking one or more distinct subunits have been variously termed ARC, CRSP, DRIP, PC2, SMCC and TRAP. Interacts with CEBPB (when not methylated).

It localises to the nucleus. In terms of biological role, component of the Mediator complex, a coactivator involved in the regulated transcription of nearly all RNA polymerase II-dependent genes. Mediator functions as a bridge to convey information from gene-specific regulatory proteins to the basal RNA polymerase II transcription machinery. Mediator is recruited to promoters by direct interactions with regulatory proteins and serves as a scaffold for the assembly of a functional pre-initiation complex with RNA polymerase II and the general transcription factors. The protein is Mediator of RNA polymerase II transcription subunit 26 (MED26) of Homo sapiens (Human).